A 376-amino-acid polypeptide reads, in one-letter code: Phospho-N-acetylmuramoyl-pentapeptide-transferase (376 aa).

A run of 10 helical transmembrane segments spans residues 28–48, 76–96, 100–120, 135–155, 179–199, 211–231, 252–272, 279–299, 307–327, and 353–373; these read RTIMATITAMVLTFVLAPWFI, TMGGALILLSLLLPTVLWADL, FVLATTAVTAGYGVIGYLDDF, YKLIGQVLIGGAAVAYTFLLA, YPIELPLYVYIPFAVFVVVAT, GLAIGPVIINAGTYLILAYIV, AGELSVYCGSVIGAGIGFLWY, VFMGDVGSLALGGGLGMLAVF, IILGGIFFIETVSVITQVLSF, and KIIVRFWIISILLALVSLASM.

The protein belongs to the glycosyltransferase 4 family. MraY subfamily. Requires Mg(2+) as cofactor.

It localises to the cell inner membrane. It carries out the reaction UDP-N-acetyl-alpha-D-muramoyl-L-alanyl-gamma-D-glutamyl-meso-2,6-diaminopimeloyl-D-alanyl-D-alanine + di-trans,octa-cis-undecaprenyl phosphate = di-trans,octa-cis-undecaprenyl diphospho-N-acetyl-alpha-D-muramoyl-L-alanyl-D-glutamyl-meso-2,6-diaminopimeloyl-D-alanyl-D-alanine + UMP. The protein operates within cell wall biogenesis; peptidoglycan biosynthesis. Catalyzes the initial step of the lipid cycle reactions in the biosynthesis of the cell wall peptidoglycan: transfers peptidoglycan precursor phospho-MurNAc-pentapeptide from UDP-MurNAc-pentapeptide onto the lipid carrier undecaprenyl phosphate, yielding undecaprenyl-pyrophosphoryl-MurNAc-pentapeptide, known as lipid I. The polypeptide is Phospho-N-acetylmuramoyl-pentapeptide-transferase (Sorangium cellulosum (strain So ce56) (Polyangium cellulosum (strain So ce56))).